The primary structure comprises 427 residues: 3-isopropylmalate dehydratase large subunit (427 aa).

[4Fe-4S] cluster is bound by residues Cys308, Cys368, and Cys371.

It belongs to the aconitase/IPM isomerase family. LeuC type 2 subfamily. Heterodimer of LeuC and LeuD. [4Fe-4S] cluster is required as a cofactor.

The enzyme catalyses (2R,3S)-3-isopropylmalate = (2S)-2-isopropylmalate. It participates in amino-acid biosynthesis; L-leucine biosynthesis; L-leucine from 3-methyl-2-oxobutanoate: step 2/4. Catalyzes the isomerization between 2-isopropylmalate and 3-isopropylmalate, via the formation of 2-isopropylmaleate. This chain is 3-isopropylmalate dehydratase large subunit, found in Geobacter metallireducens (strain ATCC 53774 / DSM 7210 / GS-15).